The following is a 328-amino-acid chain: PDZ and LIM domain protein 1 (328 aa).

Thr-2 carries the N-acetylthreonine modification. Positions 3 to 85 constitute a PDZ domain; the sequence is TLQIVLQGPG…NMTLTVARSE (83 aa). 2 positions are modified to phosphoserine: Ser-90 and Ser-130. Residue Tyr-144 is modified to Phosphotyrosine. An LIM zinc-binding domain is found at 257 to 316; that stretch reads PMCDKCGTGIVGVFVKLRERHRHPECYVCTDCGTNLKQKGHFFVEDQIYCEKHARERVTP. Residues Cys-259, Cys-262, His-279, Cys-282, Cys-285, Cys-288, Cys-306, and His-309 each contribute to the Zn(2+) site. Residue Thr-315 is modified to Phosphothreonine. Tyr-320 carries the post-translational modification Phosphotyrosine.

In terms of assembly, interacts with ACTN1, ACTN2 and ACTN4. Interacts with PDLIM4.

The protein resides in the cytoplasm. Its subcellular location is the cytoskeleton. It localises to the myofibril. It is found in the sarcomere. The protein localises to the z line. In terms of biological role, cytoskeletal protein that may act as an adapter that brings other proteins (like kinases) to the cytoskeleton. Involved in assembly, disassembly and directioning of stress fibers in fibroblasts. Required for the localization of ACTN1 and PALLD to stress fibers. Required for cell migration and in maintaining cell polarity of fibroblasts. In Bos taurus (Bovine), this protein is PDZ and LIM domain protein 1 (PDLIM1).